A 212-amino-acid chain; its full sequence is Calaxin (212 aa).

EF-hand domains are found at residues Thr-65–Gly-100, Thr-101–Lys-136, and Gly-146–Leu-181. Residues Asp-78, Asp-80, Asp-82, Cys-84, Glu-89, Asp-114, Asn-116, Asp-118, Glu-125, Asp-159, Asp-161, Asp-163, Lys-165, and Asp-170 each coordinate Ca(2+).

Component of the outer dynein arm-docking complex along with ODAD1, ODAD2, ODAD3 and ODAD4.

Its subcellular location is the cytoplasm. It is found in the cytoskeleton. The protein resides in the cilium axoneme. It localises to the cell projection. The protein localises to the cilium. Its subcellular location is the flagellum. Functionally, component of the outer dynein arm-docking complex (ODA-DC) that mediates outer dynein arms (ODA) binding onto the doublet microtubule. Seems to regulate the assembly of both ODAs and their axonemal docking complex onto ciliary microtubules. Regulates ciliary and flagellar motility and is required for cilia-driven determination of body laterality. The polypeptide is Calaxin (Clxn) (Mus musculus (Mouse)).